A 120-amino-acid chain; its full sequence is MNVQAIIKDIESEYLKTDLPTIHVGDTVRVGVRIREGGKERVQPYEGTVIAMRNGGINETITVRRVFQGVGVERVFLLHSPRVADIKVVRRGKVRRAKLYYLRNRVGKATRIRQRFDRPV.

Belongs to the bacterial ribosomal protein bL19 family.

In terms of biological role, this protein is located at the 30S-50S ribosomal subunit interface and may play a role in the structure and function of the aminoacyl-tRNA binding site. The polypeptide is Large ribosomal subunit protein bL19 (Crocosphaera subtropica (strain ATCC 51142 / BH68) (Cyanothece sp. (strain ATCC 51142))).